The following is a 196-amino-acid chain: Calcium channel flower (196 aa).

A run of 3 helical transmembrane segments spans residues 35 to 55 (LGIVAAFFAILFGLWNVLSII), 70 to 92 (LAGFVVMALEAPCCFVCIEQVGS), and 113 to 133 (AVPPIFMCFGLASLFGSGLIF).

The protein belongs to the calcium channel flower family. As to quaternary structure, homomultimer. Associates with the dally/ magu complex.

It localises to the cell membrane. The protein resides in the cytoplasmic vesicle. It is found in the secretory vesicle. Its subcellular location is the synaptic vesicle membrane. The protein localises to the presynaptic cell membrane. It localises to the endosome. Channel activity is inhibited by La(3+), which reduces Ca(2+) influx and thus inhibits it's function in promoting activity-dependent bulk endocytosis (ADBE) in response to high stimuli. Functionally, transmembrane protein which mediates synaptic endocytosis, fitness-based cell culling, neuronal culling, morphogen gradient scaling, and calcium transport. Regulates synaptic endocytosis and hence couples exo- with endocytosis. Controls two major modes of synaptic vesicle (SV) endocytosis in the synaptic boutons of neuromuscular junctions (NMJs); Ca(2+) channel-independent Clathrin-mediated endocytosis (CME) in response to mild stimulation, and Ca(2+) channel-dependent activity-dependent bulk endocytosis (ADBE) in response to strong stimulation. Functions in ADBE and subsequent SV reformation from bulk endosomes by initiating Ca(2+) channel-dependent phosphatidylinositol 4,5-bisphosphate (PtdIns(4,5)P2) compartmentalization in synaptic boutons. There it acts at the periactive zone to provide the low Ca(2+) levels required to initiate Calcineurin activation and upregulate PtdIns(4,5)P2. Conversely PtdIns(4,5)P2 enhances fwe Ca(2+) channel-activity, establishing a positive feedback loop that induces PtdIns(4,5)P2 microdomain at the periactive zone. These microdomains trigger bulk membrane invagination (i.e. ADBE) by triggering actin polymerization while also promoting localization of fwe to bulk endosomes, thereby removing the ADBE trigger to reduce endocytosis and prevent excess membrane uptake. PtdIns(4,5)P2 then promotes SV reformation from the bulk endosomes, to coordinate ADBE and subsequent SV reformation. Different combinations of the flower isoforms at the cell membrane are also required for the identification and elimination of suboptimal or supernumerary cells during development, regeneration, and adulthood. Required for the recognition and elimination of unfit cells in the developing wing during cell competition. In the developing pupal retina, mediates the elimination of unwanted postmitotic neurons, including supernumerary photoreceptor neurons that form at the periphery of the retina and are contained within incomplete ommatidia units. Also required for efficient elimination and replacement of old neurons by newly generated neurons during regeneration in the adult brain following mechanical injury. Downstream of the flower fitness fingerprints, cells identified as unwanted or unfit are eliminated via apoptosis through the expression of ahuizotl (azot). However, the cells marked for elimination by the flower isoforms only undergo apoptosis if additional thresholds are met; (1) their neighboring fit/healthy cells express different levels of the fwe isoforms, and (2) the levels of the protective signal SPARC expressed by the loser or unwanted cells are unable to inhibit caspase activation. These additional thresholds for flower-mediated apoptosis, allows useful cells to recover from transient and limited stress before they are unnecessarily eliminated. Functions with dally and magu in a mechanism of scaling, which utilises apoptosis to ensure that the dpp morphogen gradient, which mediates organ growth, remains proportional to the size of the growing wing. In this mechanism, fwe represses dally- and Magu-dependent activity in expanding the gradient, and dally/Magu inhibits fwe-dependent apoptosis to keep cell death rate low. When the levels of these different proteins are optimally regulated the gradient correctly scales with organ growth but when this fails, fwe-mediated apoptosis is activated to trim the developing tissue to match the correct size of the gradient. In Drosophila grimshawi (Hawaiian fruit fly), this protein is Calcium channel flower.